Here is a 415-residue protein sequence, read N- to C-terminus: Imidazolonepropionase (415 aa).

Positions 76 and 78 each coordinate Fe(3+). The Zn(2+) site is built by His-76 and His-78. The 4-imidazolone-5-propanoate site is built by Arg-85, Tyr-148, and His-181. Tyr-148 provides a ligand contact to N-formimidoyl-L-glutamate. Position 246 (His-246) interacts with Fe(3+). His-246 contacts Zn(2+). Glu-249 is a 4-imidazolone-5-propanoate binding site. Asp-320 contacts Fe(3+). Asp-320 provides a ligand contact to Zn(2+). Asn-322 and Gly-324 together coordinate N-formimidoyl-L-glutamate. Thr-325 is a 4-imidazolone-5-propanoate binding site.

This sequence belongs to the metallo-dependent hydrolases superfamily. HutI family. Requires Zn(2+) as cofactor. Fe(3+) serves as cofactor.

The protein localises to the cytoplasm. The catalysed reaction is 4-imidazolone-5-propanoate + H2O = N-formimidoyl-L-glutamate. It participates in amino-acid degradation; L-histidine degradation into L-glutamate; N-formimidoyl-L-glutamate from L-histidine: step 3/3. Catalyzes the hydrolytic cleavage of the carbon-nitrogen bond in imidazolone-5-propanoate to yield N-formimidoyl-L-glutamate. It is the third step in the universal histidine degradation pathway. This chain is Imidazolonepropionase, found in Thermoanaerobacter pseudethanolicus (strain ATCC 33223 / 39E) (Clostridium thermohydrosulfuricum).